Reading from the N-terminus, the 200-residue chain is LexA repressor (200 aa).

Residues 28–48 (RAEIAQHFGFSSPNAAEQHLK) constitute a DNA-binding region (H-T-H motif). Catalysis depends on for autocatalytic cleavage activity residues Ser-117 and Lys-154.

This sequence belongs to the peptidase S24 family. Homodimer.

The catalysed reaction is Hydrolysis of Ala-|-Gly bond in repressor LexA.. In terms of biological role, represses a number of genes involved in the response to DNA damage (SOS response), including recA and lexA. In the presence of single-stranded DNA, RecA interacts with LexA causing an autocatalytic cleavage which disrupts the DNA-binding part of LexA, leading to derepression of the SOS regulon and eventually DNA repair. The protein is LexA repressor of Thiobacillus denitrificans (strain ATCC 25259 / T1).